The following is a 253-amino-acid chain: Adenosylcobinamide-GDP ribazoletransferase (253 aa).

Transmembrane regions (helical) follow at residues Ile33–Leu53, Ile56–Asn76, Ile106–Leu126, Phe132–Ile152, Val178–Phe198, Leu209–Leu229, and Glu233–His253.

Belongs to the CobS family. It depends on Mg(2+) as a cofactor.

It localises to the cell membrane. The catalysed reaction is alpha-ribazole + adenosylcob(III)inamide-GDP = adenosylcob(III)alamin + GMP + H(+). It catalyses the reaction alpha-ribazole 5'-phosphate + adenosylcob(III)inamide-GDP = adenosylcob(III)alamin 5'-phosphate + GMP + H(+). The protein operates within cofactor biosynthesis; adenosylcobalamin biosynthesis; adenosylcobalamin from cob(II)yrinate a,c-diamide: step 7/7. In terms of biological role, joins adenosylcobinamide-GDP and alpha-ribazole to generate adenosylcobalamin (Ado-cobalamin). Also synthesizes adenosylcobalamin 5'-phosphate from adenosylcobinamide-GDP and alpha-ribazole 5'-phosphate. The chain is Adenosylcobinamide-GDP ribazoletransferase from Saccharolobus islandicus (strain M.16.27) (Sulfolobus islandicus).